Reading from the N-terminus, the 235-residue chain is Small ribosomal subunit protein uS3 (235 aa).

The KH type-2 domain occupies 39–107 (IRQYVFKALP…DVSLNIVEIR (69 aa)).

This sequence belongs to the universal ribosomal protein uS3 family. Part of the 30S ribosomal subunit. Forms a tight complex with proteins S10 and S14.

Functionally, binds the lower part of the 30S subunit head. Binds mRNA in the 70S ribosome, positioning it for translation. The chain is Small ribosomal subunit protein uS3 from Sphingopyxis alaskensis (strain DSM 13593 / LMG 18877 / RB2256) (Sphingomonas alaskensis).